Consider the following 279-residue polypeptide: Ribosome maturation factor RimP (279 aa).

Residues 197 to 279 (LAEEGEPEEQ…GAPALRPTPK (83 aa)) form a disordered region. The segment covering 199-210 (EEGEPEEQEEGG) has biased composition (acidic residues).

It belongs to the RimP family.

The protein localises to the cytoplasm. Its function is as follows. Required for maturation of 30S ribosomal subunits. This Methylocella silvestris (strain DSM 15510 / CIP 108128 / LMG 27833 / NCIMB 13906 / BL2) protein is Ribosome maturation factor RimP.